Reading from the N-terminus, the 472-residue chain is 6-phosphogluconate dehydrogenase, decarboxylating (472 aa).

NADP(+)-binding positions include 10 to 15 (GMAVMG), 33 to 35 (NRT), 74 to 76 (VQA), and Asn-102. Substrate-binding positions include Asn-102 and 128 to 130 (SGG). The active-site Proton acceptor is Lys-184. Substrate is bound at residue 187–188 (HN). Glu-191 acts as the Proton donor in catalysis. Tyr-192, Lys-262, Arg-289, Arg-447, and His-453 together coordinate substrate.

This sequence belongs to the 6-phosphogluconate dehydrogenase family. As to quaternary structure, homodimer.

The enzyme catalyses 6-phospho-D-gluconate + NADP(+) = D-ribulose 5-phosphate + CO2 + NADPH. It functions in the pathway carbohydrate degradation; pentose phosphate pathway; D-ribulose 5-phosphate from D-glucose 6-phosphate (oxidative stage): step 3/3. Catalyzes the oxidative decarboxylation of 6-phosphogluconate to ribulose 5-phosphate and CO(2), with concomitant reduction of NADP to NADPH. The chain is 6-phosphogluconate dehydrogenase, decarboxylating (gnd) from Lactococcus lactis subsp. cremoris (strain MG1363).